A 307-amino-acid polypeptide reads, in one-letter code: Probable acetylxylan esterase A (307 aa).

The N-terminal stretch at 1 to 19 (MILLSYLLTYLLCALTCSA) is a signal peptide. The active-site Charge relay system is the Ser150. Asn192 and Asn270 each carry an N-linked (GlcNAc...) asparagine glycan.

It belongs to the carbohydrate esterase 1 (CE1) family. AxeA subfamily. As to quaternary structure, monomer.

It is found in the secreted. It carries out the reaction Deacetylation of xylans and xylo-oligosaccharides.. Its pathway is glycan degradation; xylan degradation. Its function is as follows. Acetylxylan esterase involved in the hydrolysis of xylan, a major structural heterogeneous polysaccharide found in plant biomass representing the second most abundant polysaccharide in the biosphere, after cellulose. Degrades acetylated xylans by cleaving acetyl side groups from the hetero-xylan backbone. This Aspergillus flavus protein is Probable acetylxylan esterase A (axeA).